The sequence spans 373 residues: Heterogeneous nuclear ribonucleoprotein A3 homolog 1 (373 aa).

Residues 1–25 (MPRGGMDDHWPSSDDQGHDPKEPEQ) form a disordered region. 2 RRM domains span residues 27 to 110 (RKLF…DSAR) and 118 to 206 (KKIF…SAQR). Disordered regions lie at residues 196 to 218 (KQEM…FMGR) and 319 to 373 (DFGN…GRRF). Residues 207-218 (GRGGGGSNFMGR) show a composition bias toward gly residues. Residues 319–333 (DFGNYGGQQQSNYGP) show a composition bias toward low complexity. Residues 334 to 373 (MKGGSFSGRSSGGSGSGPYGGGYGSGGGGGGGGSYGGRRF) show a composition bias toward gly residues.

The protein localises to the nucleus. The protein is Heterogeneous nuclear ribonucleoprotein A3 homolog 1 of Xenopus laevis (African clawed frog).